The chain runs to 274 residues: MREYLNFLKYIKDNGTKKGDRTGTGTTSIFGYQMRFDLQQGFPLVTTKKIHIPSVVHELLWFLSGSTNVKYLNDNKVRIWNEWATEEGELGPIYGKQWRDFNGEGIDQIAEVIEMLKTNPNSRRILVSAWNPCVVPSEKISPQENVAKGNSALPPCHAMFQFYIADNKLSCMLTQRSADAFLGVPFNIASYSLLTHMIAQQCDLDVGEFIWSGGDCHIYNNHIEQVNEQLSREPLDLPTLKILRKPSSIFDYKYEDFEFQNYKHHPAIKAKISV.

Position 21 (Arg-21) interacts with dUMP. His-51 provides a ligand contact to (6R)-5,10-methylene-5,6,7,8-tetrahydrofolate. 123 to 124 is a binding site for dUMP; the sequence is RR. Cys-156 acts as the Nucleophile in catalysis. DUMP-binding positions include 176 to 179, Asn-187, and 217 to 219; these read RSAD and HIY. Asp-179 serves as a coordination point for (6R)-5,10-methylene-5,6,7,8-tetrahydrofolate. Ser-273 is a (6R)-5,10-methylene-5,6,7,8-tetrahydrofolate binding site.

This sequence belongs to the thymidylate synthase family. Bacterial-type ThyA subfamily. In terms of assembly, homodimer.

Its subcellular location is the cytoplasm. It carries out the reaction dUMP + (6R)-5,10-methylene-5,6,7,8-tetrahydrofolate = 7,8-dihydrofolate + dTMP. It participates in pyrimidine metabolism; dTTP biosynthesis. Its function is as follows. Catalyzes the reductive methylation of 2'-deoxyuridine-5'-monophosphate (dUMP) to 2'-deoxythymidine-5'-monophosphate (dTMP) while utilizing 5,10-methylenetetrahydrofolate (mTHF) as the methyl donor and reductant in the reaction, yielding dihydrofolate (DHF) as a by-product. This enzymatic reaction provides an intracellular de novo source of dTMP, an essential precursor for DNA biosynthesis. The sequence is that of Thymidylate synthase from Francisella philomiragia subsp. philomiragia (strain ATCC 25017 / CCUG 19701 / FSC 153 / O#319-036).